The sequence spans 254 residues: Ribosomal RNA small subunit methyltransferase G (254 aa).

Residues Gly-84, Phe-89, 136–137 (VE), and Arg-155 contribute to the S-adenosyl-L-methionine site. Residues 231–254 (HLYPRAVGIPSKQPLGIQADDNRS) form a disordered region.

Belongs to the methyltransferase superfamily. RNA methyltransferase RsmG family.

It is found in the cytoplasm. In terms of biological role, specifically methylates the N7 position of a guanine in 16S rRNA. The sequence is that of Ribosomal RNA small subunit methyltransferase G from Synechococcus sp. (strain WH7803).